Reading from the N-terminus, the 73-residue chain is Translation initiation factor IF-1 (73 aa).

The 73-residue stretch at 1 to 73 (MGKKEEAFEV…TKGRIVYRER (73 aa)) folds into the S1-like domain.

Belongs to the IF-1 family. In terms of assembly, component of the 30S ribosomal translation pre-initiation complex which assembles on the 30S ribosome in the order IF-2 and IF-3, IF-1 and N-formylmethionyl-tRNA(fMet); mRNA recruitment can occur at any time during PIC assembly.

It localises to the cytoplasm. Its function is as follows. One of the essential components for the initiation of protein synthesis. Stabilizes the binding of IF-2 and IF-3 on the 30S subunit to which N-formylmethionyl-tRNA(fMet) subsequently binds. Helps modulate mRNA selection, yielding the 30S pre-initiation complex (PIC). Upon addition of the 50S ribosomal subunit IF-1, IF-2 and IF-3 are released leaving the mature 70S translation initiation complex. In Rhodopirellula baltica (strain DSM 10527 / NCIMB 13988 / SH1), this protein is Translation initiation factor IF-1.